The sequence spans 917 residues: Nitrate reductase [NADH] 1 (917 aa).

The disordered stretch occupies residues 62–81 (DSYDDSSSDDEDESHNRNVP). Positions 63-74 (SYDDSSSDDEDE) are enriched in acidic residues. Cys-197 contacts Mo-molybdopterin. Residues 545-620 (SKMYSISEVR…LEDYRIGELI (76 aa)) form the Cytochrome b5 heme-binding domain. His-580 and His-603 together coordinate heme. Residues 660–772 (REKIPVRLIE…KGPLGHIEYK (113 aa)) enclose the FAD-binding FR-type domain. Residues 712 to 715 (RAYT), 729 to 733 (VVKVY), Phe-734, Phe-741, 746 to 748 (LMS), and Thr-799 contribute to the FAD site.

This sequence belongs to the nitrate reductase family. Homodimer. It depends on FAD as a cofactor. The cofactor is heme. Requires Mo-molybdopterin as cofactor. Root, leaf, and shoot.

The catalysed reaction is nitrite + NAD(+) + H2O = nitrate + NADH + H(+). Functionally, nitrate reductase is a key enzyme involved in the first step of nitrate assimilation in plants, fungi and bacteria. The polypeptide is Nitrate reductase [NADH] 1 (NIA1) (Arabidopsis thaliana (Mouse-ear cress)).